Reading from the N-terminus, the 510-residue chain is tRNA-2-methylthio-N(6)-dimethylallyladenosine synthase (510 aa).

The MTTase N-terminal domain occupies 19-144 (RTYQVRTFGC…LPVLLERARH (126 aa)). Positions 28, 73, 107, 181, 185, and 188 each coordinate [4Fe-4S] cluster. In terms of domain architecture, Radical SAM core spans 167–397 (RESPYAAWVS…TALQDRITYE (231 aa)). The TRAM domain maps to 400-470 (QAQTGRTLEV…PHYLEADDVS (71 aa)). Positions 482–492 (AWEARQARPEP) are enriched in basic and acidic residues. A disordered region spans residues 482–510 (AWEARQARPEPESTGPRPVGLGLPTLRRA).

It belongs to the methylthiotransferase family. MiaB subfamily. In terms of assembly, monomer. [4Fe-4S] cluster is required as a cofactor.

Its subcellular location is the cytoplasm. The enzyme catalyses N(6)-dimethylallyladenosine(37) in tRNA + (sulfur carrier)-SH + AH2 + 2 S-adenosyl-L-methionine = 2-methylsulfanyl-N(6)-dimethylallyladenosine(37) in tRNA + (sulfur carrier)-H + 5'-deoxyadenosine + L-methionine + A + S-adenosyl-L-homocysteine + 2 H(+). Its function is as follows. Catalyzes the methylthiolation of N6-(dimethylallyl)adenosine (i(6)A), leading to the formation of 2-methylthio-N6-(dimethylallyl)adenosine (ms(2)i(6)A) at position 37 in tRNAs that read codons beginning with uridine. The polypeptide is tRNA-2-methylthio-N(6)-dimethylallyladenosine synthase (Kineococcus radiotolerans (strain ATCC BAA-149 / DSM 14245 / SRS30216)).